We begin with the raw amino-acid sequence, 445 residues long: Histidinol dehydrogenase (445 aa).

3 residues coordinate NAD(+): Tyr134, Gln198, and Asn226. Substrate contacts are provided by Thr249, Gln271, and His274. Zn(2+)-binding residues include Gln271 and His274. Catalysis depends on proton acceptor residues Glu340 and His341. Substrate contacts are provided by His341, Asp374, Glu428, and His433. Residue Asp374 participates in Zn(2+) binding. Residue His433 participates in Zn(2+) binding.

This sequence belongs to the histidinol dehydrogenase family. The cofactor is Zn(2+).

The catalysed reaction is L-histidinol + 2 NAD(+) + H2O = L-histidine + 2 NADH + 3 H(+). It participates in amino-acid biosynthesis; L-histidine biosynthesis; L-histidine from 5-phospho-alpha-D-ribose 1-diphosphate: step 9/9. Its function is as follows. Catalyzes the sequential NAD-dependent oxidations of L-histidinol to L-histidinaldehyde and then to L-histidine. The sequence is that of Histidinol dehydrogenase from Nocardia farcinica (strain IFM 10152).